The primary structure comprises 619 residues: Mitochondrial Rho GTPase 1 (619 aa).

The Cytoplasmic segment spans residues methionine 1–phenylalanine 593. The Miro 1 domain maps to lysine 2–histidine 168. GTP is bound by residues arginine 14, glycine 16, lysine 17, threonine 18, and serine 19. Residue threonine 18 participates in Mg(2+) binding. Residues proline 35 and aspartate 57 each coordinate Mg(2+). GTP is bound by residues serine 59, asparagine 118, lysine 119, aspartate 121, alanine 149, and lysine 150. 2 EF-hand domains span residues alanine 184–threonine 219 and histidine 304–methionine 339. Aspartate 197, aspartate 199, aspartate 201, threonine 203, glutamate 208, aspartate 317, aspartate 319, aspartate 321, alanine 323, and glutamate 328 together coordinate Ca(2+). Residues arginine 417 to tyrosine 580 enclose the Miro 2 domain. Residues glycine 429, cysteine 430, glycine 431, lysine 432, serine 433, glycine 434, arginine 448, lysine 529, aspartate 531, threonine 559, and cysteine 560 each coordinate GTP. Glycine 429 lines the Mg(2+) pocket. A helical; Anchor for type IV membrane protein membrane pass occupies residues tryptophan 594–isoleucine 616. Residues lysine 617–arginine 619 lie on the Mitochondrial intermembrane side of the membrane.

Belongs to the mitochondrial Rho GTPase family. As to quaternary structure, homodimer.

It is found in the mitochondrion outer membrane. The catalysed reaction is GTP + H2O = GDP + phosphate + H(+). It catalyses the reaction ATP + H2O = ADP + phosphate + H(+). It carries out the reaction UTP + H2O = UDP + phosphate + H(+). In terms of biological role, atypical mitochondrial nucleoside-triphosphatase (NTPase) involved in mitochondrial trafficking. Probably involved in control of anterograde transport of mitochondria and their subcellular distribution. Can hydrolyze GTP, ATP and UTP. The polypeptide is Mitochondrial Rho GTPase 1 (RHOT1) (Gallus gallus (Chicken)).